Reading from the N-terminus, the 548-residue chain is Thermosome subunit alpha (548 aa).

The segment at 527–548 (TKPEGGQGGGMPGGMGGMDMGM) is disordered. Over residues 531 to 548 (GGQGGGMPGGMGGMDMGM) the composition is skewed to gly residues.

Belongs to the TCP-1 chaperonin family. Forms a Heterooligomeric complex of two stacked eight-membered rings.

In terms of biological role, molecular chaperone; binds unfolded polypeptides in vitro, and has a weak ATPase activity. The chain is Thermosome subunit alpha (thsA) from Thermococcus sp. (strain JCM 11816 / KS-1).